The chain runs to 445 residues: Phosphoglucosamine mutase (445 aa).

Ser-102 acts as the Phosphoserine intermediate in catalysis. The Mg(2+) site is built by Ser-102, Asp-241, Asp-243, and Asp-245. Ser-102 bears the Phosphoserine mark.

Belongs to the phosphohexose mutase family. Requires Mg(2+) as cofactor. In terms of processing, activated by phosphorylation.

The catalysed reaction is alpha-D-glucosamine 1-phosphate = D-glucosamine 6-phosphate. Functionally, catalyzes the conversion of glucosamine-6-phosphate to glucosamine-1-phosphate. This chain is Phosphoglucosamine mutase, found in Salmonella choleraesuis (strain SC-B67).